Reading from the N-terminus, the 100-residue chain is Urease subunit gamma (100 aa).

It belongs to the urease gamma subunit family. Heterotrimer of UreA (gamma), UreB (beta) and UreC (alpha) subunits. Three heterotrimers associate to form the active enzyme.

It is found in the cytoplasm. The catalysed reaction is urea + 2 H2O + H(+) = hydrogencarbonate + 2 NH4(+). It functions in the pathway nitrogen metabolism; urea degradation; CO(2) and NH(3) from urea (urease route): step 1/1. In Streptomyces avermitilis (strain ATCC 31267 / DSM 46492 / JCM 5070 / NBRC 14893 / NCIMB 12804 / NRRL 8165 / MA-4680), this protein is Urease subunit gamma.